We begin with the raw amino-acid sequence, 87 residues long: Small ribosomal subunit protein bS20 (87 aa).

The disordered stretch occupies residues 1–27 (MANIKSAKKRAIQSEKRRQHNASRRSM).

This sequence belongs to the bacterial ribosomal protein bS20 family.

Functionally, binds directly to 16S ribosomal RNA. In Aeromonas salmonicida (strain A449), this protein is Small ribosomal subunit protein bS20.